The primary structure comprises 724 residues: Acyl-coenzyme A oxidase 2 (724 aa).

The segment at 1–23 (MALISNLKDEYDHPTKTDPDTNP) is disordered. Basic and acidic residues predominate over residues 7-21 (LKDEYDHPTKTDPDT).

The protein belongs to the acyl-CoA oxidase family. It depends on FAD as a cofactor.

It is found in the peroxisome. It catalyses the reaction a 2,3-saturated acyl-CoA + O2 = a (2E)-enoyl-CoA + H2O2. The protein operates within lipid metabolism; peroxisomal fatty acid beta-oxidation. This chain is Acyl-coenzyme A oxidase 2 (POX2), found in Candida maltosa (Yeast).